Reading from the N-terminus, the 462-residue chain is Glycine--tRNA ligase (462 aa).

Substrate-binding residues include R100 and E174. ATP is bound by residues 206-208 (RNE), 216-221 (FRTREF), 290-291 (EL), and 334-337 (GADR). 221-225 (FEQME) is a binding site for substrate. 330-334 (EPSLG) contacts substrate.

The protein belongs to the class-II aminoacyl-tRNA synthetase family. As to quaternary structure, homodimer.

Its subcellular location is the cytoplasm. It carries out the reaction tRNA(Gly) + glycine + ATP = glycyl-tRNA(Gly) + AMP + diphosphate. Functionally, catalyzes the attachment of glycine to tRNA(Gly). The protein is Glycine--tRNA ligase of Acetivibrio thermocellus (strain ATCC 27405 / DSM 1237 / JCM 9322 / NBRC 103400 / NCIMB 10682 / NRRL B-4536 / VPI 7372) (Clostridium thermocellum).